The sequence spans 629 residues: EF-hand calcium-binding domain-containing protein 7 (629 aa).

A disordered region spans residues 1–25 (MAISPRSDATFSSQKSTPSESPRTK). Residues 7–21 (SDATFSSQKSTPSES) show a composition bias toward polar residues. EF-hand domains follow at residues 102-137 (TSKAELLKSFKQLDVNDDGCILHTDLYKFLTKRGEK) and 138-173 (MTREEVNAIINLADVNADGKFDYIKFCKLYMTTNEQ). A disordered region spans residues 195-229 (NHIEGSPERDPSPVPKPSPKITRKTDPETFLNKGD). A phosphoserine mark is found at Ser200 and Ser212. The 36-residue stretch at 403–438 (EFKSTLSDIFEVIDLDGNGLLSLEEYNFFELRTSGE) folds into the EF-hand 3 domain. Asp416, Asp418, Asn420, and Glu427 together coordinate Ca(2+).

In terms of assembly, component of the EvC complex composed of EFCAB7, IQCE, EVC2 and EVC; built from two subcomplexes, EVC2:EVC and EFCAB7:IQCE. Interacts (via EF-hand 1 and 2) with IQCE (via N-terminus); this interaction anchors the EVC-EVC2 complex in a signaling microdomain at the base of cilia and stimulates the Hedgehog (Hh) pathway. Interacts with EVC2 (via N-terminal end). Interacts with EVC.

The protein resides in the cell projection. Its subcellular location is the cilium membrane. Component of the EvC complex that positively regulates ciliary Hedgehog (Hh) signaling. Required for the localization of the EVC2:EVC subcomplex at the base of primary cilia. The protein is EF-hand calcium-binding domain-containing protein 7 (EFCAB7) of Homo sapiens (Human).